The primary structure comprises 190 residues: Nucleoside triphosphate pyrophosphatase (190 aa).

The active-site Proton acceptor is the aspartate 69.

This sequence belongs to the Maf family. A divalent metal cation is required as a cofactor.

Its subcellular location is the cytoplasm. It carries out the reaction a ribonucleoside 5'-triphosphate + H2O = a ribonucleoside 5'-phosphate + diphosphate + H(+). The enzyme catalyses a 2'-deoxyribonucleoside 5'-triphosphate + H2O = a 2'-deoxyribonucleoside 5'-phosphate + diphosphate + H(+). Its function is as follows. Nucleoside triphosphate pyrophosphatase. May have a dual role in cell division arrest and in preventing the incorporation of modified nucleotides into cellular nucleic acids. This is Nucleoside triphosphate pyrophosphatase from Helicobacter pylori (strain HPAG1).